Here is a 290-residue protein sequence, read N- to C-terminus: Triplex capsid protein 1 (290 aa).

The protein belongs to the herpesviridae TRX1 protein family. As to quaternary structure, interacts with TRX2, MCP and capsid vertex component 2/CVC2.

It localises to the virion. The protein resides in the host nucleus. In terms of biological role, structural component of the T=16 icosahedral capsid. The capsid is composed of pentamers and hexamers of major capsid protein/MCP, which are linked together by heterotrimers called triplexes. These triplexes are formed by a single molecule of triplex protein 1/TRX1 and two copies of triplex protein 2/TRX2. Additionally, TRX1 is required for efficient transport of TRX2 to the nucleus, which is the site of capsid assembly. The sequence is that of Triplex capsid protein 1 from Human cytomegalovirus (strain AD169) (HHV-5).